Here is a 309-residue protein sequence, read N- to C-terminus: Large ribosomal subunit protein mL45 (309 aa).

The protein belongs to the mitochondrion-specific ribosomal protein mL45 family. Component of the mitochondrial ribosome large subunit (39S) which comprises a 16S rRNA and about 50 distinct proteins.

It localises to the mitochondrion. In terms of biological role, component of the mitochondrial large ribosomal subunit (mt-LSU). Within the mitochondrial ribosomes, required to direct the nascent polypeptide toward the tunnel exit and position the exit at a distance from the membrane surface. This Xenopus laevis (African clawed frog) protein is Large ribosomal subunit protein mL45 (mrpl45).